We begin with the raw amino-acid sequence, 231 residues long: Platelet-activating factor acetylhydrolase IB subunit alpha1 (231 aa).

Serine 2 carries the post-translational modification N-acetylserine. Serine 2 is subject to Phosphoserine. Active-site residues include serine 47, aspartate 192, and histidine 195.

It belongs to the 'GDSL' lipolytic enzyme family. Platelet-activating factor acetylhydrolase IB beta/gamma subunits subfamily. As to quaternary structure, forms a catalytic dimer which is either homodimer (alpha1/alpha1 homodimer) or heterodimer with PAFAH1B2 (alpha1/alpha2 heterodimer). Component of the cytosolic (PAF-AH (I)) heterotetrameric enzyme, which is composed of PAFAH1B1 (beta), PAFAH1B2 (alpha2) and PAFAH1B3 (alpha1) subunits. The catalytic activity of the enzyme resides in the alpha1 (PAFAH1B3) and alpha2 (PAFAH1B2) subunits, whereas the beta subunit (PAFAH1B1) has regulatory activity. Trimer formation is not essential for the catalytic activity. Interacts with VLDLR; this interaction may modulate the Reelin pathway. In terms of tissue distribution, in the adult, expressed in brain, skeletal muscle, kidney, thymus, spleen, colon, testis, ovary and peripheral blood leukocytes. In the fetus, highest expression occurs in brain.

It localises to the cytoplasm. It carries out the reaction a 1-O-alkyl-2-acetyl-sn-glycero-3-phosphocholine + H2O = a 1-O-alkyl-sn-glycero-3-phosphocholine + acetate + H(+). The enzyme catalyses 1-O-hexadecyl-2-acetyl-sn-glycero-3-phosphocholine + H2O = 1-O-hexadecyl-sn-glycero-3-phosphocholine + acetate + H(+). It catalyses the reaction 1-O-hexadecyl-2-acetyl-sn-glycero-3-phosphate + H2O = 1-O-hexadecyl-sn-glycero-3-phosphate + acetate + H(+). Beta subunit (PAFAH1B1) inhibits the acetylhydrolase activity of the alpha1/alpha1 catalytic homodimer. In terms of biological role, alpha1 catalytic subunit of the cytosolic type I platelet-activating factor (PAF) acetylhydrolase (PAF-AH (I)) heterotetrameric enzyme that catalyzes the hydrolyze of the acetyl group at the sn-2 position of PAF and its analogs and modulates the action of PAF. The activity and substrate specificity of PAF-AH (I) are affected by its subunit composition. Both alpha1/alpha1 homodimer (PAFAH1B3/PAFAH1B3 homodimer) and alpha1/alpha2 heterodimer(PAFAH1B3/PAFAH1B2 heterodimer) hydrolyze 1-O-alkyl-2-acetyl-sn-glycero-3-phosphoric acid (AAGPA) more efficiently than PAF, but they have little hydrolytic activity towards 1-O-alkyl-2-acetyl-sn-glycero-3-phosphorylethanolamine (AAGPE). Plays an important role during the development of brain. In Homo sapiens (Human), this protein is Platelet-activating factor acetylhydrolase IB subunit alpha1.